Here is a 200-residue protein sequence, read N- to C-terminus: Small ribosomal subunit protein uS4 (200 aa).

Residues 22-43 (TGKELERRPYAPGQHGPTQRKK) are disordered. The S4 RNA-binding domain maps to 92–170 (QRLDNIVYRL…VPEYVTFDAE (79 aa)).

Belongs to the universal ribosomal protein uS4 family. Part of the 30S ribosomal subunit. Contacts protein S5. The interaction surface between S4 and S5 is involved in control of translational fidelity.

Its function is as follows. One of the primary rRNA binding proteins, it binds directly to 16S rRNA where it nucleates assembly of the body of the 30S subunit. Functionally, with S5 and S12 plays an important role in translational accuracy. The protein is Small ribosomal subunit protein uS4 of Listeria monocytogenes serovar 1/2a (strain ATCC BAA-679 / EGD-e).